Reading from the N-terminus, the 340-residue chain is Cobalt-precorrin-5B C(1)-methyltransferase (340 aa).

It belongs to the CbiD family.

The catalysed reaction is Co-precorrin-5B + S-adenosyl-L-methionine = Co-precorrin-6A + S-adenosyl-L-homocysteine. It participates in cofactor biosynthesis; adenosylcobalamin biosynthesis; cob(II)yrinate a,c-diamide from sirohydrochlorin (anaerobic route): step 6/10. Its function is as follows. Catalyzes the methylation of C-1 in cobalt-precorrin-5B to form cobalt-precorrin-6A. The protein is Cobalt-precorrin-5B C(1)-methyltransferase of Pyrobaculum aerophilum (strain ATCC 51768 / DSM 7523 / JCM 9630 / CIP 104966 / NBRC 100827 / IM2).